Here is a 230-residue protein sequence, read N- to C-terminus: Large ribosomal subunit protein uL1 (230 aa).

The protein belongs to the universal ribosomal protein uL1 family. In terms of assembly, part of the 50S ribosomal subunit.

In terms of biological role, binds directly to 23S rRNA. The L1 stalk is quite mobile in the ribosome, and is involved in E site tRNA release. Functionally, protein L1 is also a translational repressor protein, it controls the translation of the L11 operon by binding to its mRNA. The chain is Large ribosomal subunit protein uL1 from Afipia carboxidovorans (strain ATCC 49405 / DSM 1227 / KCTC 32145 / OM5) (Oligotropha carboxidovorans).